Consider the following 498-residue polypeptide: Glycylpeptide N-tetradecanoyltransferase 2 (498 aa).

The interval 1–87 (MAEDSESAAS…QPPSKNSTIP (87 aa)) is disordered. Residues 15 to 32 (ELDDQDTCGIDGDNEEET) show a composition bias toward acidic residues. Residue Ser38 is modified to Phosphoserine. Residues 46-57 (KKKKKKQKRKKE) are compositionally biased toward basic residues. Residues 61–72 (SGGTKSDSASDS) show a composition bias toward polar residues. Positions 117, 122, 250, 252, 258, 260, 261, and 262 each coordinate tetradecanoyl-CoA.

This sequence belongs to the NMT family.

The protein localises to the cytoplasm. Its subcellular location is the membrane. The catalysed reaction is N-terminal glycyl-[protein] + tetradecanoyl-CoA = N-tetradecanoylglycyl-[protein] + CoA + H(+). The enzyme catalyses N-terminal glycyl-L-lysyl-[protein] + tetradecanoyl-CoA = N-terminal glycyl-(N(6)-tetradecanoyl)-L-lysyl-[protein] + CoA + H(+). Adds a myristoyl group to the N-terminal glycine residue of certain cellular and viral proteins. Also able to mediate N-terminal lysine myristoylation of proteins: catalyzes myristoylation of ARF6 on both 'Gly-2' and 'Lys-3'. Lysine myristoylation is required to maintain ARF6 on membranes during the GTPase cycle. The chain is Glycylpeptide N-tetradecanoyltransferase 2 (NMT2) from Bos taurus (Bovine).